We begin with the raw amino-acid sequence, 124 residues long: Autophagy-related protein 8 (124 aa).

A lipid anchor (Phosphatidylethanolamine amidated glycine) is attached at G116. The propeptide at 117 to 124 is removed in mature form; that stretch reads GAGPLLEK.

Belongs to the ATG8 family. In terms of assembly, conjugation to phosphatidylethanolamine (PE) leads to homodimerization. Interacts with ATG1, ATG3, ATG4, ATG7 and ATG12. The C-terminal 8 residues of ATG8 are removed by ATG4 to expose Gly-116 at the C-terminus. This Gly-116 forms then a thioester bond with the 'Cys-550' of ATG7 (E1-like activating enzyme) before being transferred to the 'Cys-244' of ATG3 (the specific E2 conjugating enzyme), in order to be finally amidated with phosphatidylethanolamine. This lipid modification anchors ATG8 to membranes and can be reversed by ATG4, releasing soluble ATG8.

It localises to the cytoplasmic vesicle. Its subcellular location is the cvt vesicle membrane. It is found in the autophagosome membrane. The protein resides in the vacuole membrane. Functionally, ubiquitin-like modifier involved in cytoplasm to vacuole transport (Cvt) vesicles and autophagosome formation. With ATG4, mediates the delivery of the vesicles and autophagosomes to the vacuole via the microtubule cytoskeleton. Required for selective autophagic degradation of the nucleus (nucleophagy) as well as for mitophagy which contributes to regulate mitochondrial quantity and quality by eliminating the mitochondria to a basal level to fulfill cellular energy requirements and preventing excess ROS production. Also participates in membrane fusion events that take place in the early secretory pathway. Also involved in endoplasmic reticulum-specific autophagic process and is essential for the survival of cells subjected to severe ER stress. The ATG8-PE conjugate mediates tethering between adjacent membranes and stimulates membrane hemifusion, leading to expansion of the autophagosomal membrane during autophagy. Moreover not only conjugation, but also subsequent ATG8-PE deconjugation is an important step required to facilitate multiple events during macroautophagy, and especially for efficient autophagosome biogenesis, the assembly of ATG9-containing tubulovesicular clusters into phagophores/autophagosomes, and for the disassembly of PAS-associated ATG components. This is Autophagy-related protein 8 from Kluyveromyces marxianus (strain DMKU3-1042 / BCC 29191 / NBRC 104275) (Yeast).